Here is a 242-residue protein sequence, read N- to C-terminus: MSTNPKPAFRRILLKLSGEALMGDEGFGIDPKVLDRMAQEVKELVELGIQVGVVIGGGNLFRGEGLAKAGMNRVVGDHMGMLATVMNGLAMRDALHRAYVNARLMSAIPLKGVCDDYNWAEAISLLKSGRVVIFAAGTGNPFCTTDSAACLRGIEIEAEVVLKGTKVDGVYSDDPMKNPEAVKYDELSYTEVLDKELKVMDLAAFTMARDHDMPILVFNMNKPGALRRVVMGEEEGTMIRAK.

15 to 18 is a binding site for ATP; it reads KLSG. Residues 23 to 28 are involved in allosteric activation by GTP; sequence GDEGFG. A UMP-binding site is contributed by G57. Residues G58 and R62 each contribute to the ATP site. Residues D77 and 138–145 contribute to the UMP site; that span reads TGNPFCTT. Positions 165, 171, and 174 each coordinate ATP.

This sequence belongs to the UMP kinase family. In terms of assembly, homohexamer.

It localises to the cytoplasm. It catalyses the reaction UMP + ATP = UDP + ADP. The protein operates within pyrimidine metabolism; CTP biosynthesis via de novo pathway; UDP from UMP (UMPK route): step 1/1. Allosterically activated by GTP. Inhibited by UTP. Its function is as follows. Catalyzes the reversible phosphorylation of UMP to UDP. The chain is Uridylate kinase from Shewanella sp. (strain MR-4).